The chain runs to 337 residues: Diacylglycerol O-acyltransferase 2-like protein 6 (337 aa).

2 consecutive transmembrane segments (helical) span residues 22–42 (MPVY…FLVF) and 102–122 (YIIA…NFAT).

The protein belongs to the diacylglycerol acyltransferase family.

The protein resides in the endoplasmic reticulum membrane. It catalyses the reaction 1,2-di-(9Z-octadecenoyl)-sn-glycerol + (9Z)-octadecenoyl-CoA = 1,2,3-tri-(9Z-octadecenoyl)-glycerol + CoA. In terms of biological role, diglyceride acyltransferase that uses fatty acyl-CoA as substrate. Particularly active with oleate as a substrate. Has no wax synthase activity to produce wax esters. The protein is Diacylglycerol O-acyltransferase 2-like protein 6 (DGAT2L6) of Bos taurus (Bovine).